A 1173-amino-acid chain; its full sequence is PR domain zinc finger protein 10 (1173 aa).

The interval 146–211 (RLPPMEGADS…AEPPRPFDPN (66 aa)) is disordered. Positions 154-167 (DSSTTINSLPSPNA) are enriched in polar residues. Over residues 172–202 (KEDDDDDDDDDDDEEEEDDDGEDSDLDDWEA) the composition is skewed to acidic residues. The region spanning 248 to 366 (LPLVLYIDRF…PKQELKVWYA (119 aa)) is the SET domain. Residues 267-371 (IPKRTQFGPL…KVWYAASYAE (105 aa)) are N-terminal PR domain; essential for transcriptional activator activity. A C2H2-type 1 zinc finger spans residues 395–417 (WPCYECNRRFMSSEQLQQHLNSH). A compositionally biased stretch (basic residues) spans 430–447 (RGRTRTRRKFGPGRRPGR). Residues 430–451 (RGRTRTRRKFGPGRRPGRPPKF) form a disordered region. 9 C2H2-type zinc fingers span residues 559 to 581 (FKCL…LRFH), 589 to 611 (LTCD…MKFH), 617 to 639 (YSCI…VVVH), 645 to 668 (FSCP…RSFH), 673 to 695 (YQCT…MLRH), 701 to 724 (FLCS…QRMH), 756 to 779 (FKCR…SKRH), 801 to 824 (YYCQ…LKNH), and 863 to 886 (VCCP…RKKH). Residues 926–1153 (QAMTELSQTL…PASNSSQTTQ (228 aa)) are C-terminal glutamine-rich region; essential for transcriptional activator activity. Disordered stretches follow at residues 1014–1056 (PTSG…ANSA) and 1125–1173 (KKSS…ISKP). The segment covering 1150 to 1160 (QTTQYIITTTT) has biased composition (low complexity). Residues 1161-1173 (NMNGSSEVHISKP) show a composition bias toward polar residues.

This sequence belongs to the class V-like SAM-binding methyltransferase superfamily.

The protein resides in the nucleus. Functionally, transcriptional activator, essential for early embryonic development and survival of embryonic stem cells (ESCs). Supports cell growth and survival during early development by transcriptionally activating the expression of the translation initiation factor EIF3B, to sustain global translation. Activates the transcription of FLNC. The chain is PR domain zinc finger protein 10 (prdm10) from Xenopus tropicalis (Western clawed frog).